Reading from the N-terminus, the 78-residue chain is Acyl carrier protein (78 aa).

The 76-residue stretch at 2–77 (STIEERVKKI…AAIDYVNAHQ (76 aa)) folds into the Carrier domain. S37 is modified (O-(pantetheine 4'-phosphoryl)serine).

The protein belongs to the acyl carrier protein (ACP) family. 4'-phosphopantetheine is transferred from CoA to a specific serine of apo-ACP by AcpS. This modification is essential for activity because fatty acids are bound in thioester linkage to the sulfhydryl of the prosthetic group.

The protein resides in the cytoplasm. The protein operates within lipid metabolism; fatty acid biosynthesis. Carrier of the growing fatty acid chain in fatty acid biosynthesis. This is Acyl carrier protein from Pseudomonas entomophila (strain L48).